The chain runs to 470 residues: MTITAPFDNSYARLPAVFYTRLKPTPVRDPSLIAYNEPLGDILGISAADAAERAAVFSGAKLPEGAAPLAQLYAGHQFGNFNPQLGDGRAILLGEVIGTDGKRYDVQLKGSGPTPYSRMGDGRAWLGPVLREYVVSEAMHALGVPTTRALAATLTGEDVLRETVLPGAVLTRVAASHLRVGTFQIFAHRRQIDALKELTDYAIARHAPDADGPLGLLRAVCAAQAELVAGWMSLGFIHGVMNTDNSAISGETIDYGPCAFMDVYHPDTVFSSIDQTGRYAYSNQPRIAVWNMAQLATALLQQMDDPEAAVEEATQIVHAMPTQIEAAWLDRMGKKIGIAKATPEDTPLIEGLLKLMQEQKADFTNTFDALARSDARDQFLDRDAFDEWCAQWRARLSTQSNPSAVMQAASPRVIPRNHRVEEMIAAAVQGDYAPFERLLKACTDPFNTDDTDLMRPPTKDEIVPATFCGT.

G86, G88, R89, K109, D121, G122, R172, and R179 together coordinate ATP. D244 acts as the Proton acceptor in catalysis. Residues N245 and D254 each contribute to the Mg(2+) site. D254 is an ATP binding site.

This sequence belongs to the SELO family. The cofactor is Mg(2+). Requires Mn(2+) as cofactor.

It carries out the reaction L-seryl-[protein] + ATP = 3-O-(5'-adenylyl)-L-seryl-[protein] + diphosphate. The catalysed reaction is L-threonyl-[protein] + ATP = 3-O-(5'-adenylyl)-L-threonyl-[protein] + diphosphate. It catalyses the reaction L-tyrosyl-[protein] + ATP = O-(5'-adenylyl)-L-tyrosyl-[protein] + diphosphate. The enzyme catalyses L-histidyl-[protein] + UTP = N(tele)-(5'-uridylyl)-L-histidyl-[protein] + diphosphate. It carries out the reaction L-seryl-[protein] + UTP = O-(5'-uridylyl)-L-seryl-[protein] + diphosphate. The catalysed reaction is L-tyrosyl-[protein] + UTP = O-(5'-uridylyl)-L-tyrosyl-[protein] + diphosphate. In terms of biological role, nucleotidyltransferase involved in the post-translational modification of proteins. It can catalyze the addition of adenosine monophosphate (AMP) or uridine monophosphate (UMP) to a protein, resulting in modifications known as AMPylation and UMPylation. The sequence is that of Protein nucleotidyltransferase YdiU from Roseobacter denitrificans (strain ATCC 33942 / OCh 114) (Erythrobacter sp. (strain OCh 114)).